Reading from the N-terminus, the 107-residue chain is MCSSLWHLYLIRTASGMLYTGITTDVQRRLDQHQRGGGAKSLRGKGPLTLVFQSPAGDRSRVLRWEYRVKQLSRAQKEHFVALQEQALPHFGLEHSALAAGKSAPAR.

A GIY-YIG domain is found at Ser4–His79.

It belongs to the UPF0213 family.

The chain is UPF0213 protein SG0387 from Sodalis glossinidius (strain morsitans).